A 4043-amino-acid polypeptide reads, in one-letter code: Polyketide synthase-nonribosomal peptide synthetase (4043 aa).

In terms of domain architecture, Ketosynthase family 3 (KS3) spans 8–446 (SEPIAIIGTG…GANSHAILES (439 aa)). Active-site for beta-ketoacyl synthase activity residues include cysteine 181, histidine 320, and histidine 366. An acyl transferase region spans residues 557–877 (VFTGQGAQWA…SRGNSDVEAF (321 aa)). Positions 944–1078 (NELLGRQVLD…CRLRITVGDS (135 aa)) are N-terminal hotdog fold. The 303-residue stretch at 944–1246 (NELLGRQVLD…TQPLSSPTEA (303 aa)) folds into the PKS/mFAS DH domain. The interval 945–1243 (ELLGRQVLDG…GLQTQPLSSP (299 aa)) is dehydratase (DH) domain. Histidine 976 (proton acceptor; for dehydratase activity) is an active-site residue. The segment at 1093–1246 (LLEVESDRFY…TQPLSSPTEA (154 aa)) is C-terminal hotdog fold. Catalysis depends on aspartate 1154, which acts as the Proton donor; for dehydratase activity. Positions 1400–1585 (RYTKYLAAMA…GIETAIPHHD (186 aa)) are methyltransferase (MT) domain. Residues 2115–2288 (TYWLVGLTGG…NASAVHIGAI (174 aa)) are ketoreductase (KR)domain. A Carrier 1 domain is found at 2394–2475 (SSSADIYDII…EMVTQAQELL (82 aa)). The interval 2395 to 2472 (SSADIYDIIS…TVGEMVTQAQ (78 aa)) is peptidyl carrier protein. Serine 2435 carries the O-(pantetheine 4'-phosphoryl)serine modification. Disordered regions lie at residues 2476–2575 (PKEL…DPSR) and 2587–2630 (EKHL…SQII). 2 stretches are compositionally biased toward polar residues: residues 2494-2512 (PKNTVQPKQQTKKTIQLQN) and 2520-2534 (ALSQQVSSGVQNMIK). Positions 2537 to 2550 (PPKEAEAKQPRPEV) are enriched in basic and acidic residues. Residues 2617–2627 (TSSSSSSTSAS) are compositionally biased toward low complexity. Residues 2640 to 3069 (KSVPMAFGQS…NPALRLNVPP (430 aa)) form a condensation region. The tract at residues 3102-3502 (EIVERYPTHV…EGNLILGGRI (401 aa)) is adenylation. The 81-residue stretch at 3617-3697 (TDESPSMAKM…GMVSLIDHSE (81 aa)) folds into the Carrier 2 domain. A thiolation region spans residues 3622-3694 (SMAKMRDVWA…SLTGMVSLID (73 aa)). The residue at position 3657 (serine 3657) is an O-(pantetheine 4'-phosphoryl)serine. A reductase-like region spans residues 3735–3954 (LTGATGFLGR…DFVSADRVAM (220 aa)).

It in the C-terminal section; belongs to the NRP synthetase family.

The protein operates within mycotoxin biosynthesis. Its function is as follows. Hybrid PKS-NRPS synthetase; part of the gene cluster that mediates the biosynthesis of the mycotoxins cytochalasins E and K. The hybrid PKS-NRPS synthetase ccsA and the enoyl reductase ccsC are responsible for fusion of phenylalanine with an octaketide backbone and subsequent release of the stable tetramic acid precursor. The polyketide synthase module (PKS) of the PKS-NRPS ccsA is responsible for the synthesis of the octaketide backbone. The downstream nonribosomal peptide synthetase (NRPS) amidates the carboxyl end of the octaketide with a phenylalanine. A reductase-like domain (R) at the C-terminus catalyzes the reductive release of the polyketide-amino acid intermediate. Because ccsA lacks a designated enoylreductase (ER) domain, the required activity is provided the enoyl reductase ccsC. Upon formation of the 11-membered carbocycle-fused perhydroisoindolone intermediate, a number of oxidative steps are required to afford the final cytochalasin E and K, including two hydroxylations at C17 and C18, one alcohol oxidation at C17, one epoxidation at C6 and C7 and two Baeyer-Villiger oxidations. The oxidative modification at C17, C18 and the C6-C7 epoxidation are likely to be catalyzed by the two cytochrome P450 oxygenases ccsD and ccsG. CcsD may be responsible for the epoxidation of the C6-C7 double bond. CcsG may be responsible for the successive oxidative modifications at C17 and C18. The double Baeyer-Villiger oxidations of ketocytochalasin to precytochalasin and cytochalasin Z(16) are among the final steps leading to cytochalasin E and K and are catalyzed by ccsB. The first oxygen insertion step follows that of the classic BVMO mechanism, generating the ester precytochalasin. Release of precytochalasin into an aqueous environment can generate the shunt product iso-precytochalasin through spontaneous isomerization. Alternatively, precytochalasin can undergo further oxidation by ccsB to yield the in-line carbonate-containing cytochalasin Z(16). Cytochalasin Z(16) is a precursor to cytochalasin E and cytochalasin K, whereas iso-precytochalasin is a precursor to cytochalasin Z(17) and rosellichalasin. The hydrolyase ccsE may catalyze hydrolysis of epoxide bond in cytochalasin E to afford cytochalasin K. The function of ccsF has not been assigned but it may play a role in post-PKS-NRPS biosynthetic step, resistance or transport of cytochalasins and related PKS-NRPS products. This chain is Polyketide synthase-nonribosomal peptide synthetase, found in Aspergillus clavatus (strain ATCC 1007 / CBS 513.65 / DSM 816 / NCTC 3887 / NRRL 1 / QM 1276 / 107).